A 414-amino-acid chain; its full sequence is Histidinol dehydrogenase (414 aa).

Positions 116, 177, and 200 each coordinate NAD(+). Thr223, Gln245, and His248 together coordinate substrate. Positions 245 and 248 each coordinate Zn(2+). Residues Glu313 and His314 each act as proton acceptor in the active site. Substrate is bound by residues His314, Asp347, Glu401, and His406. Asp347 is a binding site for Zn(2+). His406 is a binding site for Zn(2+).

It belongs to the histidinol dehydrogenase family. Zn(2+) is required as a cofactor.

It carries out the reaction L-histidinol + 2 NAD(+) + H2O = L-histidine + 2 NADH + 3 H(+). It functions in the pathway amino-acid biosynthesis; L-histidine biosynthesis; L-histidine from 5-phospho-alpha-D-ribose 1-diphosphate: step 9/9. In terms of biological role, catalyzes the sequential NAD-dependent oxidations of L-histidinol to L-histidinaldehyde and then to L-histidine. This is Histidinol dehydrogenase from Staphylococcus epidermidis (strain ATCC 35984 / DSM 28319 / BCRC 17069 / CCUG 31568 / BM 3577 / RP62A).